A 192-amino-acid chain; its full sequence is Xanthine phosphoribosyltransferase (192 aa).

Xanthine-binding residues include leucine 20 and asparagine 27. Residue 128–132 coordinates 5-phospho-alpha-D-ribose 1-diphosphate; sequence AHGEA. Lysine 156 lines the xanthine pocket.

It belongs to the purine/pyrimidine phosphoribosyltransferase family. Xpt subfamily. As to quaternary structure, homodimer.

Its subcellular location is the cytoplasm. It carries out the reaction XMP + diphosphate = xanthine + 5-phospho-alpha-D-ribose 1-diphosphate. It functions in the pathway purine metabolism; XMP biosynthesis via salvage pathway; XMP from xanthine: step 1/1. Its function is as follows. Converts the preformed base xanthine, a product of nucleic acid breakdown, to xanthosine 5'-monophosphate (XMP), so it can be reused for RNA or DNA synthesis. This Lactobacillus gasseri (strain ATCC 33323 / DSM 20243 / BCRC 14619 / CIP 102991 / JCM 1131 / KCTC 3163 / NCIMB 11718 / NCTC 13722 / AM63) protein is Xanthine phosphoribosyltransferase.